A 124-amino-acid polypeptide reads, in one-letter code: Tax1-binding protein 3 homolog (124 aa).

One can recognise a PDZ domain in the interval 18–106 (AVELHKQEVI…DRAVKFIKQS (89 aa)).

Functionally, may regulate a number of protein-protein interactions by competing for PDZ domain binding sites. This Caenorhabditis elegans protein is Tax1-binding protein 3 homolog.